The primary structure comprises 581 residues: Laccase-2 (581 aa).

Positions 1 to 19 (MKYSTVFTALTALFAQASA) are cleaved as a signal peptide. 2 consecutive Plastocyanin-like domains span residues 74–191 (SVEN…GPAT) and 197–353 (DVGA…YDSS). N-linked (GlcNAc...) asparagine glycans are attached at residues asparagine 77, asparagine 93, and asparagine 120. Cu cation contacts are provided by histidine 125, histidine 127, histidine 169, and histidine 171. Cysteine 146 and cysteine 562 form a disulfide bridge. N-linked (GlcNAc...) asparagine glycosylation is found at asparagine 232, asparagine 283, asparagine 343, asparagine 408, asparagine 427, and asparagine 441. The 135-residue stretch at 413 to 547 (LLDWSSPTTL…AMQFVESQSS (135 aa)) folds into the Plastocyanin-like 3 domain. Cu cation contacts are provided by histidine 464, histidine 467, histidine 469, histidine 526, cysteine 527, histidine 528, and histidine 532.

The protein belongs to the multicopper oxidase family. It depends on Cu cation as a cofactor.

The protein localises to the secreted. It carries out the reaction 4 hydroquinone + O2 = 4 benzosemiquinone + 2 H2O. Its function is as follows. Lignin degradation and detoxification of lignin-derived products. The sequence is that of Laccase-2 (lcc2) from Botryotinia fuckeliana (Noble rot fungus).